Consider the following 149-residue polypeptide: Calmodulin-1 (149 aa).

4 consecutive EF-hand domains span residues 8 to 43 (EQISEFKEAFSLFDKDGDGCITTKELGTVMRSLGQN), 44 to 79 (PTEAELQDMINEVDADGNGTIDFPEFLNLMAKKMKD), 81 to 116 (DSEEELKEAFRVFDKDQNGFISAAELRHVMTNLGEK), and 117 to 149 (LTDEEVEEMIREADVDGDGQINYEEFVKIMMAK). Ca(2+) is bound by residues D21, D23, D25, C27, E32, D57, D59, N61, T63, E68, D94, D96, N98, E105, D130, D132, D134, Q136, and E141.

This sequence belongs to the calmodulin family. Interacts with ZAR1 (via CaMBD domain). Binds to IQD1. Binds to MEE62 in a calcium-dependent manner.

It is found in the cytoplasm. The protein localises to the cell membrane. In terms of biological role, calmodulin mediates the control of a large number of enzymes, ion channels and other proteins by Ca(2+). Among the enzymes to be stimulated by the calmodulin-Ca(2+) complex are a number of protein kinases and phosphatases. The polypeptide is Calmodulin-1 (CAM1) (Arabidopsis thaliana (Mouse-ear cress)).